A 252-amino-acid polypeptide reads, in one-letter code: tRNA-cytidine(32) 2-sulfurtransferase (252 aa).

Residues Ser-37–Ser-42 carry the PP-loop motif motif. 3 residues coordinate [4Fe-4S] cluster: Cys-112, Cys-115, and Cys-202.

It belongs to the TtcA family. As to quaternary structure, homodimer. Mg(2+) is required as a cofactor. [4Fe-4S] cluster serves as cofactor.

The protein localises to the cytoplasm. The catalysed reaction is cytidine(32) in tRNA + S-sulfanyl-L-cysteinyl-[cysteine desulfurase] + AH2 + ATP = 2-thiocytidine(32) in tRNA + L-cysteinyl-[cysteine desulfurase] + A + AMP + diphosphate + H(+). Its pathway is tRNA modification. Functionally, catalyzes the ATP-dependent 2-thiolation of cytidine in position 32 of tRNA, to form 2-thiocytidine (s(2)C32). The sulfur atoms are provided by the cysteine/cysteine desulfurase (IscS) system. The protein is tRNA-cytidine(32) 2-sulfurtransferase of Geotalea daltonii (strain DSM 22248 / JCM 15807 / FRC-32) (Geobacter daltonii).